Consider the following 879-residue polypeptide: Alanine--tRNA ligase (879 aa).

The Zn(2+) site is built by His564, His568, Cys666, and His670.

It belongs to the class-II aminoacyl-tRNA synthetase family. Zn(2+) serves as cofactor.

Its subcellular location is the cytoplasm. It catalyses the reaction tRNA(Ala) + L-alanine + ATP = L-alanyl-tRNA(Ala) + AMP + diphosphate. In terms of biological role, catalyzes the attachment of alanine to tRNA(Ala) in a two-step reaction: alanine is first activated by ATP to form Ala-AMP and then transferred to the acceptor end of tRNA(Ala). Also edits incorrectly charged Ser-tRNA(Ala) and Gly-tRNA(Ala) via its editing domain. This chain is Alanine--tRNA ligase, found in Crocosphaera subtropica (strain ATCC 51142 / BH68) (Cyanothece sp. (strain ATCC 51142)).